The primary structure comprises 609 residues: Elongation factor 4 (609 aa).

The 183-residue stretch at 11-193 (ERIRNFSIIA…QIVEKIPAPS (183 aa)) folds into the tr-type G domain. Residues 23 to 28 (DHGKST) and 140 to 143 (NKID) contribute to the GTP site.

It belongs to the TRAFAC class translation factor GTPase superfamily. Classic translation factor GTPase family. LepA subfamily.

Its subcellular location is the cell membrane. The catalysed reaction is GTP + H2O = GDP + phosphate + H(+). Its function is as follows. Required for accurate and efficient protein synthesis under certain stress conditions. May act as a fidelity factor of the translation reaction, by catalyzing a one-codon backward translocation of tRNAs on improperly translocated ribosomes. Back-translocation proceeds from a post-translocation (POST) complex to a pre-translocation (PRE) complex, thus giving elongation factor G a second chance to translocate the tRNAs correctly. Binds to ribosomes in a GTP-dependent manner. The chain is Elongation factor 4 from Geobacillus thermodenitrificans (strain NG80-2).